The chain runs to 78 residues: Cell division topological specificity factor (78 aa).

This sequence belongs to the MinE family.

In terms of biological role, prevents the cell division inhibition by proteins MinC and MinD at internal division sites while permitting inhibition at polar sites. This ensures cell division at the proper site by restricting the formation of a division septum at the midpoint of the long axis of the cell. The chain is Cell division topological specificity factor from Helicobacter hepaticus (strain ATCC 51449 / 3B1).